The primary structure comprises 789 residues: Isoamylase SU1, chloroplastic (789 aa).

The transit peptide at 1–44 (MAQQLPCVSSPRPLLAVPAGRWRAGVRGRPNVAGLGRGRLSLHA) directs the protein to the chloroplast. The Nucleophile role is filled by D417. Residue E473 is the Proton donor of the active site.

This sequence belongs to the glycosyl hydrolase 13 family.

It localises to the plastid. Its subcellular location is the chloroplast. The enzyme catalyses Hydrolysis of (1-&gt;6)-alpha-D-glucosidic branch linkages in glycogen, amylopectin and their beta-limit dextrins.. It functions in the pathway glycan biosynthesis; starch biosynthesis. Isoamylase starch-debranching enzyme involved in amylopectin biosynthesis in endosperm. Functions by removing excess branches or improper branches that interfere with the formation of double helices of the cluster chains of amylopectin and crystallization of starch. The protein is Isoamylase SU1, chloroplastic of Zea mays (Maize).